The primary structure comprises 635 residues: Chaperone protein DnaK (635 aa).

Thr198 is subject to Phosphothreonine; by autocatalysis. The tract at residues 606-635 (QATAASPGAEAPKADDDVVDAEFSEVDENK) is disordered. Over residues 622–635 (DVVDAEFSEVDENK) the composition is skewed to acidic residues.

This sequence belongs to the heat shock protein 70 family.

In terms of biological role, acts as a chaperone. The chain is Chaperone protein DnaK from Novosphingobium aromaticivorans (strain ATCC 700278 / DSM 12444 / CCUG 56034 / CIP 105152 / NBRC 16084 / F199).